The sequence spans 170 residues: MIIERLVGNLRDLNPLDFNVDHVDLEWFETRKKIARFKTRQGKDIAIRLKDAPKLGLSQGDILFKEEKEIIAVNILDSEVIHIQAKSVAEVAKICYEIGNRHAALYYGESQFEFKTPFEKPTLALLEKLGVQNRVLSSKLDSKERLTVSMPHSEPNFKVSLASDFKVVVK.

Belongs to the UreE family.

It localises to the cytoplasm. Involved in urease metallocenter assembly. Binds nickel. Probably functions as a nickel donor during metallocenter assembly. The chain is Urease accessory protein UreE from Helicobacter pylori (strain J99 / ATCC 700824) (Campylobacter pylori J99).